The following is a 378-amino-acid chain: Small RNA 2'-O-methyltransferase (378 aa).

Aspartate 61 is a binding site for S-adenosyl-L-methionine. The Mg(2+) site is built by glutamate 114, glutamate 117, histidine 118, and histidine 176.

It belongs to the methyltransferase superfamily. HEN1 family. The cofactor is Mg(2+).

Its subcellular location is the cytoplasm. It carries out the reaction small RNA 3'-end nucleotide + S-adenosyl-L-methionine = small RNA 3'-end 2'-O-methylnucleotide + S-adenosyl-L-homocysteine + H(+). Its function is as follows. Methyltransferase that adds a 2'-O-methyl group at the 3'-end of small RNAs. This is Small RNA 2'-O-methyltransferase from Schizosaccharomyces pombe (strain 972 / ATCC 24843) (Fission yeast).